The chain runs to 178 residues: Inorganic pyrophosphatase (178 aa).

The substrate site is built by Lys-30, Arg-44, and Tyr-56. Positions 66, 71, and 103 each coordinate Mg(2+). Tyr-142 is a binding site for substrate.

Belongs to the PPase family. Homohexamer. Mg(2+) is required as a cofactor.

It localises to the cytoplasm. The catalysed reaction is diphosphate + H2O = 2 phosphate + H(+). Its function is as follows. Catalyzes the hydrolysis of inorganic pyrophosphate (PPi) forming two phosphate ions. This Bradyrhizobium diazoefficiens (strain JCM 10833 / BCRC 13528 / IAM 13628 / NBRC 14792 / USDA 110) protein is Inorganic pyrophosphatase.